A 188-amino-acid polypeptide reads, in one-letter code: Peptidyl-tRNA hydrolase (188 aa).

Tyr-14 provides a ligand contact to tRNA. The active-site Proton acceptor is the His-19. Positions 64, 66, and 112 each coordinate tRNA.

The protein belongs to the PTH family. In terms of assembly, monomer.

Its subcellular location is the cytoplasm. The enzyme catalyses an N-acyl-L-alpha-aminoacyl-tRNA + H2O = an N-acyl-L-amino acid + a tRNA + H(+). Hydrolyzes ribosome-free peptidyl-tRNAs (with 1 or more amino acids incorporated), which drop off the ribosome during protein synthesis, or as a result of ribosome stalling. Its function is as follows. Catalyzes the release of premature peptidyl moieties from peptidyl-tRNA molecules trapped in stalled 50S ribosomal subunits, and thus maintains levels of free tRNAs and 50S ribosomes. This chain is Peptidyl-tRNA hydrolase, found in Clostridium perfringens (strain SM101 / Type A).